The following is a 1158-amino-acid chain: Type IV pilus biogenesis factor PilY1 (1158 aa).

A signal peptide spans 1 to 29 (MIHQITRAGKSLLAAGCTLSILFASDSYA). Positions 841, 843, 845, 847, and 849 each coordinate Ca(2+).

It belongs to the PilY1 family.

The protein localises to the fimbrium. It localises to the membrane. It is found in the cytoplasm. Its subcellular location is the cytosol. Involved in pilus assembly, twitching motility and adhesion to host cells. Primes type IV pili (T4P) assembly and is required for inclusion of minor pilins PilV, PilW and PilX to the surface pili. Stabilizes assembled pilus fibers likely by antagonizing retraction mediated by PilT. Calcium-binding and calcium release by PilY1 seem to be essential for twitching motility and for regulation of pilus retraction dynamics of PilT. Regulates surface-activated virulence possibly by acting as a surface-attachment mechanosensor. In Pseudomonas aeruginosa (strain UCBPP-PA14), this protein is Type IV pilus biogenesis factor PilY1.